Here is a 90-residue protein sequence, read N- to C-terminus: UPF0298 protein SSU98_1559 (90 aa).

Belongs to the UPF0298 family.

Its subcellular location is the cytoplasm. The sequence is that of UPF0298 protein SSU98_1559 from Streptococcus suis (strain 98HAH33).